A 382-amino-acid polypeptide reads, in one-letter code: Mannitol-1-phosphate 5-dehydrogenase (382 aa).

3–14 contacts NAD(+); it reads ALHFGAGNIGRG. Lys269 carries the N6-acetyllysine modification.

This sequence belongs to the mannitol dehydrogenase family.

The enzyme catalyses D-mannitol 1-phosphate + NAD(+) = beta-D-fructose 6-phosphate + NADH + H(+). This is Mannitol-1-phosphate 5-dehydrogenase from Shigella boydii serotype 18 (strain CDC 3083-94 / BS512).